Consider the following 38-residue polypeptide: Large ribosomal subunit protein bL36 (38 aa).

Belongs to the bacterial ribosomal protein bL36 family.

The sequence is that of Large ribosomal subunit protein bL36 from Hamiltonella defensa subsp. Acyrthosiphon pisum (strain 5AT).